Consider the following 455-residue polypeptide: Protein indeterminate-domain 7 (455 aa).

The disordered stretch occupies residues 1 to 52 (MMMNRDILFHQQQQQQMEENMSNLTSASGDQASVSSGNRTETSGSNINQHHQ). Positions 17 to 49 (MEENMSNLTSASGDQASVSSGNRTETSGSNINQ) are enriched in polar residues. Phosphoserine is present on Ser-82. 2 consecutive C2H2-type zinc fingers follow at residues 92–114 (FICEVCNKGFQRDQNLQLHKRGH) and 134–164 (YVCPEPGCVHHHPSRALGDLTGIKKHFFRKH). A Nuclear localization signal motif is present at residues 156–163 (IKKHFFRK). The C2H2-type 2; degenerate zinc-finger motif lies at 169 to 192 (WKCEKCSKKYAVQSDWKAHAKTCG). Cys-171, Cys-174, His-187, Cys-191, Cys-198, Cys-200, His-213, and Cys-217 together coordinate Zn(2+). A CCHC-type 2; atypical zinc finger spans residues 196–219 (YKCDCGTLFSRRDSFITHRAFCDA). The SHR-binding stretch occupies residues 206-218 (RRDSFITHRAFCD). Residues 235–351 (QASNSPHHHH…PEEEERSSRS (117 aa)) are disordered. 2 stretches are compositionally biased toward low complexity: residues 248 to 265 (QQNIGFSSSSQNIISNSN) and 288 to 299 (SSNPNPNGNNGN).

It localises to the nucleus. Functionally, probable transcription factor. This Arabidopsis thaliana (Mouse-ear cress) protein is Protein indeterminate-domain 7.